A 210-amino-acid polypeptide reads, in one-letter code: Placenta-expressed transcript 1 protein (210 aa).

Residues 1–26 form the signal peptide; sequence MAVLGSPLLPLRLFLCFGLLFFSASC. Residues 27-189 are Extracellular-facing; the sequence is TDHPDQCMIF…THKNSANRVF (163 aa). Residues N67 and N94 are each glycosylated (N-linked (GlcNAc...) asparagine). A helical transmembrane segment spans residues 190–209; that stretch reads RSPVRDAIQILLAFLTSKLL. A topological domain (cytoplasmic) is located at residue F210.

In terms of tissue distribution, highly expressed in placenta.

It is found in the membrane. It localises to the apical cell membrane. Modulates leading keratinocyte migration and cellular adhesion to matrix proteins during a wound-healing response and promotes wound repair. May play a role during trichilemmal differentiation of the hair follicle. The sequence is that of Placenta-expressed transcript 1 protein (PLET1) from Sus scrofa (Pig).